The primary structure comprises 474 residues: Vasculin-like protein 1 (474 aa).

The segment at 17-42 (QSAKSPTATFEKHGEHLPRGEGRFGV) is disordered. The span at 26–38 (FEKHGEHLPRGEG) shows a compositional bias: basic and acidic residues. Ser-49 and Ser-76 each carry phosphoserine. Positions 91–191 (GNPSGWHSSS…VWENPPSAKQ (101 aa)) are disordered. Residues 116 to 128 (NHRHWNGSFHSRK) show a composition bias toward basic residues. Over residues 136 to 154 (PPMEIREEKKEDKVEKLQF) the composition is skewed to basic and acidic residues. Ser-202 bears the Phosphoserine mark. The tract at residues 238-371 (LVPKPVPPPS…EEGCHQNGLA (134 aa)) is disordered. Residues 262-277 (GSLSSSRESAFTSPIS) are compositionally biased toward polar residues. The segment covering 291 to 312 (SSPKESPSSTTPPIEISSSRLT) has biased composition (low complexity). Ser-292 carries the post-translational modification Phosphoserine. A Phosphothreonine modification is found at Thr-301. Basic and acidic residues-rich tracts occupy residues 317–346 (RTTD…CDKL) and 356–365 (EPKENGEEGC). Ser-382 is subject to Phosphoserine. Residues 453-474 (AEFEDSDTETSSSETSDDDAWK) form a disordered region.

It belongs to the vasculin family.

Its subcellular location is the nucleus. Functionally, possible transcription factor. In Homo sapiens (Human), this protein is Vasculin-like protein 1 (GPBP1L1).